The chain runs to 174 residues: NAD(P)H-quinone oxidoreductase subunit J, chloroplastic (174 aa).

The protein belongs to the complex I 30 kDa subunit family. In terms of assembly, NDH is composed of at least 16 different subunits, 5 of which are encoded in the nucleus.

The protein localises to the plastid. The protein resides in the chloroplast thylakoid membrane. The enzyme catalyses a plastoquinone + NADH + (n+1) H(+)(in) = a plastoquinol + NAD(+) + n H(+)(out). It catalyses the reaction a plastoquinone + NADPH + (n+1) H(+)(in) = a plastoquinol + NADP(+) + n H(+)(out). NDH shuttles electrons from NAD(P)H:plastoquinone, via FMN and iron-sulfur (Fe-S) centers, to quinones in the photosynthetic chain and possibly in a chloroplast respiratory chain. The immediate electron acceptor for the enzyme in this species is believed to be plastoquinone. Couples the redox reaction to proton translocation, and thus conserves the redox energy in a proton gradient. This Mesostigma viride (Green alga) protein is NAD(P)H-quinone oxidoreductase subunit J, chloroplastic.